Here is a 209-residue protein sequence, read N- to C-terminus: Large ribosomal subunit protein uL3 (209 aa).

Glutamine 150 bears the N5-methylglutamine mark.

This sequence belongs to the universal ribosomal protein uL3 family. Part of the 50S ribosomal subunit. Forms a cluster with proteins L14 and L19. In terms of processing, methylated by PrmB.

Functionally, one of the primary rRNA binding proteins, it binds directly near the 3'-end of the 23S rRNA, where it nucleates assembly of the 50S subunit. This Ectopseudomonas mendocina (strain ymp) (Pseudomonas mendocina) protein is Large ribosomal subunit protein uL3.